A 204-amino-acid polypeptide reads, in one-letter code: ATP-dependent Clp protease proteolytic subunit (204 aa).

Catalysis depends on Ser-100, which acts as the Nucleophile. His-125 is a catalytic residue.

It belongs to the peptidase S14 family. In terms of assembly, fourteen ClpP subunits assemble into 2 heptameric rings which stack back to back to give a disk-like structure with a central cavity, resembling the structure of eukaryotic proteasomes.

It localises to the cytoplasm. The enzyme catalyses Hydrolysis of proteins to small peptides in the presence of ATP and magnesium. alpha-casein is the usual test substrate. In the absence of ATP, only oligopeptides shorter than five residues are hydrolyzed (such as succinyl-Leu-Tyr-|-NHMec, and Leu-Tyr-Leu-|-Tyr-Trp, in which cleavage of the -Tyr-|-Leu- and -Tyr-|-Trp bonds also occurs).. Cleaves peptides in various proteins in a process that requires ATP hydrolysis. Has a chymotrypsin-like activity. Plays a major role in the degradation of misfolded proteins. The protein is ATP-dependent Clp protease proteolytic subunit of Anaeromyxobacter sp. (strain Fw109-5).